Consider the following 1044-residue polypeptide: Integrin alpha-8 (1044 aa).

The signal sequence occupies residues 1–23 (MPRRQPPRPLLLLSALLCAPASA). At 24–991 (FNLDEEKLTV…WSTPNVSFVI (968 aa)) the chain is on the extracellular side. FG-GAP repeat units lie at residues 28–90 (EEKL…RCRQ), 104–165 (NGTR…AYAE), 170–222 (RNSN…ITNY), 236–288 (QTGV…SSDL), 289–354 (TFIQ…FLFR), 355–413 (DPQI…GLKT), and 417–480 (QVLN…LNPM). Asparagine 66 carries an N-linked (GlcNAc...) asparagine glycan. Residues cysteine 81 and cysteine 88 are joined by a disulfide bond. N-linked (GlcNAc...) asparagine glycosylation is present at asparagine 104. Residues cysteine 132 and cysteine 153 are joined by a disulfide bond. N-linked (GlcNAc...) asparagine glycosylation is present at asparagine 159. A disulfide bridge links cysteine 169 with cysteine 182. Asparagine 221 is a glycosylation site (N-linked (GlcNAc...) asparagine). Residues glutamate 257, threonine 259, aspartate 261, and glutamate 265 each coordinate Ca(2+). N-linked (GlcNAc...) asparagine glycosylation is found at asparagine 284 and asparagine 293. The Ca(2+) site is built by aspartate 311, asparagine 313, aspartate 315, leucine 317, aspartate 319, aspartate 377, asparagine 379, aspartate 381, tyrosine 383, and aspartate 385. The Cell attachment site signature appears at 437-439 (RGD). Ca(2+) is bound by residues aspartate 441, aspartate 443, asparagine 445, tyrosine 447, and aspartate 449. Asparagine 486 carries an N-linked (GlcNAc...) asparagine glycan. Intrachain disulfides connect cysteine 489–cysteine 500 and cysteine 506–cysteine 562. N-linked (GlcNAc...) asparagine glycosylation occurs at asparagine 587. Intrachain disulfides connect cysteine 623-cysteine 629 and cysteine 695-cysteine 708. 7 N-linked (GlcNAc...) asparagine glycosylation sites follow: asparagine 701, asparagine 719, asparagine 751, asparagine 762, asparagine 818, asparagine 877, and asparagine 904. 2 cysteine pairs are disulfide-bonded: cysteine 849–cysteine 905 and cysteine 910–cysteine 915. N-linked (GlcNAc...) asparagine glycans are attached at residues asparagine 952 and asparagine 986. A helical membrane pass occupies residues 992-1015 (PLWVIILAIMLGLLVLAVLTLALW). The Cytoplasmic segment spans residues 1016-1044 (KCGFFDRARPPQDDMADREQLTNNKTTDA).

It belongs to the integrin alpha chain family. Heterodimer of an alpha and a beta subunit. The alpha subunit is composed of a heavy and a light chain linked by a disulfide bond. Alpha-8 associates with beta-1. As to expression, prominently expressed on axons and on cells in contact with basal laminae in embryos.

It localises to the membrane. Its subcellular location is the cell membrane. In terms of biological role, integrin alpha-8/beta-1 functions in the genesis of kidney and probably of other organs by regulating the recruitment of mesenchymal cells into epithelial structures. It recognizes the sequence R-G-D in a wide array of ligands including TNC, FN1, SPP1, TGFB1, TGFB3 and VTN. NPNT is probably its functional ligand in kidney genesis. Neuronal receptor for TNC it mediates cell-cell interactions and regulates neurite outgrowth of sensory and motor neurons. The polypeptide is Integrin alpha-8 (ITGA8) (Gallus gallus (Chicken)).